A 1675-amino-acid chain; its full sequence is Clathrin heavy chain 1 (1675 aa).

Ala-2 is modified (N-acetylalanine). Positions 2 to 479 (AQILPIRFQE…VDPTLALSVY (478 aa)) are globular terminal domain. 7 WD40-like repeat regions span residues 24–67 (NIGF…RPIS), 68–107 (ADSAIMNPASKVIALKAGKTLQIFNIEMKSKMKAHTMTDD), 108–149 (VTFW…SSLA), 150–195 (GCQI…QPIE), 196–257 (GHAA…PEAQ), 258–301 (NDFP…ISGE), and 302–330 (TIFVTAPHEATAGIIGVNRKGQVLSVCVE). Ser-67 carries the post-translational modification Phosphoserine. Position 105 is a phosphothreonine (Thr-105). Tyr-184 is subject to Phosphotyrosine. Position 394 is a phosphothreonine (Thr-394). The tract at residues 449 to 465 (EKWLKEDKLECSEELGD) is binding site for the uncoating ATPase, involved in lattice disassembly. Residues 480–523 (LRANVPNKVIQCFAETGQVQKIVLYAKKVGYTPDWIFLLRNVMR) are flexible linker. Residues 524–634 (ISPDQGQQFA…RALEHFTDLY (111 aa)) form a distal segment region. Residues 524–1675 (ISPDQGQQFA…QPQPGFGYSM (1152 aa)) form a heavy chain arm region. 7 CHCR repeats span residues 537–683 (VQDE…QICV), 686–828 (ASKY…SEDV), 833–972 (ILVV…PLID), 979–1124 (LSET…VKEA), 1128–1269 (YIKA…FRLA), 1274–1420 (LHIV…LLLN), and 1423–1566 (LMVL…RECF). Tyr-634 carries the phosphotyrosine modification. The segment at 639–1675 (AVVHTHLLNP…QPQPGFGYSM (1037 aa)) is proximal segment. Residue Lys-737 is modified to N6-succinyllysine. The residue at position 856 (Lys-856) is an N6-acetyllysine. Tyr-899 bears the Phosphotyrosine mark. The residue at position 1167 (Ser-1167) is a Phosphoserine. Tyr-1206 is modified (phosphotyrosine). Positions 1213-1522 (AAKLLYNNVS…YLFKGNNRWK (310 aa)) are involved in binding clathrin light chain. Phosphoserine is present on Ser-1229. Lys-1441 carries the N6-acetyllysine; alternate modification. Lys-1441 carries the N6-succinyllysine; alternate modification. A phosphotyrosine mark is found at Tyr-1477 and Tyr-1487. Ser-1494 is modified (phosphoserine). Position 1501 is an N6-acetyllysine (Lys-1501). Residues 1550–1675 (AEELLQWFLQ…QPQPGFGYSM (126 aa)) are trimerization.

This sequence belongs to the clathrin heavy chain family. In terms of assembly, clathrin triskelions, composed of 3 heavy chains and 3 light chains, are the basic subunits of the clathrin coat. In the presence of light chains, hub assembly is influenced by both the pH and the concentration of calcium. Interacts with HIP1. Interacts with DENND1A, DENND1B and DENND1C. Interacts with ERBB2. Interacts with FKBP6. Interacts with OCRL. Interacts with CKAP5 and TACC3 forming the TACC3/ch-TOG/clathrin complex located at spindle inter-microtubules bridges; the complex implicates clathrin triskelions; TACC3 and CLTC are proposed to form a composite microtubule interaction surface. Plays a role in early autophagosome formation. Interacts with ATG16L1 (via N-terminus). Interacts with RFTN1; the interaction occurs in response to pathogens. Interacts with USP2 isoform 2. Interacts with TMEM106B (via N-terminus). Interacts with DNAJC6; this interaction produces a local change in heavy-chain contacts, creating a detectable global distortion of the clathrin coat and leads to the recruitment of HSPA8.

The protein resides in the cytoplasmic vesicle membrane. Its subcellular location is the membrane. It localises to the coated pit. The protein localises to the melanosome. It is found in the cytoplasm. The protein resides in the cytoskeleton. Its subcellular location is the spindle. Its function is as follows. Clathrin is the major protein of the polyhedral coat of coated pits and vesicles. Two different adapter protein complexes link the clathrin lattice either to the plasma membrane or to the trans-Golgi network. Acts as a component of the TACC3/ch-TOG/clathrin complex proposed to contribute to stabilization of kinetochore fibers of the mitotic spindle by acting as inter-microtubule bridge. The TACC3/ch-TOG/clathrin complex is required for the maintenance of kinetochore fiber tension. Plays a role in early autophagosome formation. Interaction with DNAJC6 mediates the recruitment of HSPA8 to the clathrin lattice and creates local destabilization of the lattice promoting uncoating. The chain is Clathrin heavy chain 1 from Mus musculus (Mouse).